A 310-amino-acid chain; its full sequence is Methionyl-tRNA formyltransferase (310 aa).

111-114 (SILP) provides a ligand contact to (6S)-5,6,7,8-tetrahydrofolate.

Belongs to the Fmt family.

It carries out the reaction L-methionyl-tRNA(fMet) + (6R)-10-formyltetrahydrofolate = N-formyl-L-methionyl-tRNA(fMet) + (6S)-5,6,7,8-tetrahydrofolate + H(+). Its function is as follows. Attaches a formyl group to the free amino group of methionyl-tRNA(fMet). The formyl group appears to play a dual role in the initiator identity of N-formylmethionyl-tRNA by promoting its recognition by IF2 and preventing the misappropriation of this tRNA by the elongation apparatus. In Finegoldia magna (strain ATCC 29328 / DSM 20472 / WAL 2508) (Peptostreptococcus magnus), this protein is Methionyl-tRNA formyltransferase.